Consider the following 262-residue polypeptide: Small ribosomal subunit protein eS4C (262 aa).

The S4 RNA-binding domain occupies 42–105 (LPLIVFLRNR…GEHFRLVYDI (64 aa)). Threonine 194 is modified (phosphothreonine).

It belongs to the eukaryotic ribosomal protein eS4 family. Component of the small ribosomal subunit (SSU). Mature yeast ribosomes consist of a small (40S) and a large (60S) subunit. The 40S small subunit contains 1 molecule of ribosomal RNA (18S rRNA) and at least 33 different proteins. The large 60S subunit contains 3 rRNA molecules (25S, 5.8S and 5S rRNA) and at least 46 different proteins.

It localises to the cytoplasm. Component of the ribosome, a large ribonucleoprotein complex responsible for the synthesis of proteins in the cell. The small ribosomal subunit (SSU) binds messenger RNAs (mRNAs) and translates the encoded message by selecting cognate aminoacyl-transfer RNA (tRNA) molecules. The large subunit (LSU) contains the ribosomal catalytic site termed the peptidyl transferase center (PTC), which catalyzes the formation of peptide bonds, thereby polymerizing the amino acids delivered by tRNAs into a polypeptide chain. The nascent polypeptides leave the ribosome through a tunnel in the LSU and interact with protein factors that function in enzymatic processing, targeting, and the membrane insertion of nascent chains at the exit of the ribosomal tunnel. This is Small ribosomal subunit protein eS4C (rps403) from Schizosaccharomyces pombe (strain 972 / ATCC 24843) (Fission yeast).